The sequence spans 196 residues: Small nuclear ribonucleoprotein-associated protein B (196 aa).

The Sm domain maps to 7–101 (AHSSRLANLI…ILSTVVEDKP (95 aa)). The Nuclear localization signal signature appears at 105–132 (KKERLVRDKKEKKQAQKQTKLRKEKEKK). The segment covering 108–118 (RLVRDKKEKKQ) has biased composition (basic and acidic residues). The interval 108–196 (RLVRDKKEKK…FQPPPGFKRK (89 aa)) is disordered. The segment covering 140–181 (NTANAKHTSSNSREIAQPSSSRYNGGNDNIGANRSRFNNEAP) has biased composition (polar residues).

It belongs to the snRNP SmB/SmN family. As to quaternary structure, component of the Sm core complex, present in spliceosomal snRNP U1, U2, U4/U6 and U5. The core complex contains SMB1, SMD1, SMD2, SMD3, SME1, SMX3 and SMX2 (Sm proteins B, D1, D2, D3, E, F and G, respectively), and is probably a heptameric ring structure. SMB1 specifically interacts with SMD3. Belongs to the CWC complex (or CEF1-associated complex), a spliceosome sub-complex reminiscent of a late-stage spliceosome composed of the U2, U5 and U6 snRNAs and at least BUD13, BUD31, BRR2, CDC40, CEF1, CLF1, CUS1, CWC2, CWC15, CWC21, CWC22, CWC23, CWC24, CWC25, CWC27, ECM2, HSH155, IST3, ISY1, LEA1, MSL1, NTC20, PRP8, PRP9, PRP11, PRP19, PRP21, PRP22, PRP45, PRP46, SLU7, SMB1, SMD1, SMD2, SMD3, SMX2, SMX3, SNT309, SNU114, SPP2, SYF1, SYF2, RSE1 and YJU2. Component of the U4/U6-U5 tri-snRNP complex composed of the U4, U6 and U5 snRNAs and at least PRP3, PRP4, PRP6, PRP8, PRP18, PRP38, SNU13, SNU23, SNU66, SNU114, SPP381, SMB1, SMD1, SMD2, SMD3, SMX2, SMX3, LSM2, LSM3, LSM4, LSM5, LSM6, LSM7, LSM8, BRR2 and DIB1. Interacts with the trimethylguanosine synthase TGS1.

It is found in the nucleus. The protein resides in the cytoplasm. In terms of biological role, plays a role in pre-mRNA splicing as a core component of the spliceosomal U1, U2, U4 and U5 small nuclear ribonucleoproteins (snRNPs), the building blocks of the spliceosome. This is Small nuclear ribonucleoprotein-associated protein B (SMB1) from Saccharomyces cerevisiae (strain ATCC 204508 / S288c) (Baker's yeast).